The primary structure comprises 634 residues: Sodium-dependent multivitamin transporter (634 aa).

Helical transmembrane passes span 23-43, 65-85, 100-120, 142-162, 175-195, 207-227, 255-275, 295-315, 350-370, 403-423, 427-447, and 455-475; these read FSVVDYVVFGLLLVLSLVIGL, MGCLPVALSLLATFQSAVAIL, FLGCSYFLGLLIPAHIFIPVF, ICGTVTFIFQMVVYMGVALYA, LWLSVLALGIVCNIYTALGGL, LIMFLGQLVVIIVGAAKVGGL, FWTLAFGGVFMMLSLYGVNQA, AVFPCQQVALCMSCLIGLVMF, LPGLFVACLFSGSLSTISSAF, FAYGLVCLGMAYVSSHLGSVL, LSIFGMVGGPLLGLFCLGMFF, and AIVGLLTGLTMAFWIGIGSIV. N-linked (GlcNAc...) asparagine glycosylation is found at asparagine 488 and asparagine 497. The chain crosses the membrane as a helical span at residues 526-546; sequence LWYSAHNSTTVIAVGLIVSLL.

Belongs to the sodium:solute symporter (SSF) (TC 2.A.21) family. As to quaternary structure, interacts with PDZD11. In terms of tissue distribution, expressed in the jejunum (at protein level). Expressed in lung, skeletal muscle, heart, brain, kidney, intestine, liver, and placenta.

The protein localises to the cell membrane. It localises to the apical cell membrane. It carries out the reaction biotin(out) + 2 Na(+)(out) = biotin(in) + 2 Na(+)(in). It catalyses the reaction (R)-pantothenate(out) + 2 Na(+)(out) = (R)-pantothenate(in) + 2 Na(+)(in). The catalysed reaction is (R)-lipoate(out) + 2 Na(+)(out) = (R)-lipoate(in) + 2 Na(+)(in). The enzyme catalyses iodide(out) + 2 Na(+)(out) = iodide(in) + 2 Na(+)(in). Sodium-dependent multivitamin transporter that mediates the electrogenic transport of pantothenate, biotin, lipoate and iodide. Functions as a Na(+)-coupled substrate symporter where the stoichiometry of Na(+):substrate is 2:1, creating an electrochemical Na(+) gradient used as driving force for substrate uptake. Required for biotin and pantothenate uptake in the intestine across the brush border membrane. Plays a role in the maintenance of intestinal mucosa integrity, by providing the gut mucosa with biotin. Contributes to the luminal uptake of biotin and pantothenate into the brain across the blood-brain barrier. The chain is Sodium-dependent multivitamin transporter from Rattus norvegicus (Rat).